Here is a 458-residue protein sequence, read N- to C-terminus: UDP-N-acetylmuramate--L-alanine ligase (458 aa).

118 to 124 (GTHGKTT) is a binding site for ATP.

The protein belongs to the MurCDEF family.

It is found in the cytoplasm. It catalyses the reaction UDP-N-acetyl-alpha-D-muramate + L-alanine + ATP = UDP-N-acetyl-alpha-D-muramoyl-L-alanine + ADP + phosphate + H(+). It participates in cell wall biogenesis; peptidoglycan biosynthesis. Functionally, cell wall formation. This Clostridium botulinum (strain Langeland / NCTC 10281 / Type F) protein is UDP-N-acetylmuramate--L-alanine ligase.